The primary structure comprises 393 residues: Probable xylan O-acetyltransferase 11 (393 aa).

Over 1-9 (MHQPAIMQR) the chain is Cytoplasmic. A helical; Signal-anchor for type II membrane protein transmembrane segment spans residues 10–26 (ALAVVALLAAAAAIAAA). Over 27-393 (QGESPELLPF…LFFPARDEAI (367 aa)) the chain is Lumenal. Cystine bridges form between cysteine 45–cysteine 96, cysteine 67–cysteine 132, cysteine 76–cysteine 368, and cysteine 283–cysteine 364. Asparagine 102 carries N-linked (GlcNAc...) asparagine glycosylation. The short motif at 119-121 (GDS) is the GDS motif element. Catalysis depends on serine 121, which acts as the Nucleophile. Asparagine 325 carries N-linked (GlcNAc...) asparagine glycosylation. Aspartate 363 acts as the Proton donor in catalysis. The short motif at 363 to 366 (DCTH) is the DXXH motif element. Catalysis depends on histidine 366, which acts as the Proton acceptor.

The protein belongs to the PC-esterase family. TBL subfamily. In terms of tissue distribution, expressed in roots, leaves and stems.

It localises to the golgi apparatus membrane. Probable xylan acetyltransferase required for 2-O- and 3-O-monoacetylation of xylosyl residues in xylan. Possesses extremely low activity in vitro. This is Probable xylan O-acetyltransferase 11 from Oryza sativa subsp. japonica (Rice).